The primary structure comprises 394 residues: Elongation factor Tu (394 aa).

The 195-residue stretch at 10–204 (KPHVNIGTIG…AVDSYIPQPV (195 aa)) folds into the tr-type G domain. Residues 19-26 (GHVDHGKT) form a G1 region. Residue 19–26 (GHVDHGKT) participates in GTP binding. Thr-26 is a Mg(2+) binding site. The tract at residues 60 to 64 (GITIS) is G2. The tract at residues 81-84 (DCPG) is G3. GTP is bound by residues 81–85 (DCPGH) and 136–139 (NKVD). Residues 136–139 (NKVD) are G4. Positions 174-176 (SAL) are G5.

Belongs to the TRAFAC class translation factor GTPase superfamily. Classic translation factor GTPase family. EF-Tu/EF-1A subfamily. As to quaternary structure, monomer.

The protein resides in the cytoplasm. The catalysed reaction is GTP + H2O = GDP + phosphate + H(+). GTP hydrolase that promotes the GTP-dependent binding of aminoacyl-tRNA to the A-site of ribosomes during protein biosynthesis. The polypeptide is Elongation factor Tu (Rickettsia montanensis).